Reading from the N-terminus, the 258-residue chain is Imidazole glycerol phosphate synthase subunit HisF (258 aa).

Residues Asp11 and Asp130 contribute to the active site.

It belongs to the HisA/HisF family. Heterodimer of HisH and HisF.

It localises to the cytoplasm. It carries out the reaction 5-[(5-phospho-1-deoxy-D-ribulos-1-ylimino)methylamino]-1-(5-phospho-beta-D-ribosyl)imidazole-4-carboxamide + L-glutamine = D-erythro-1-(imidazol-4-yl)glycerol 3-phosphate + 5-amino-1-(5-phospho-beta-D-ribosyl)imidazole-4-carboxamide + L-glutamate + H(+). It functions in the pathway amino-acid biosynthesis; L-histidine biosynthesis; L-histidine from 5-phospho-alpha-D-ribose 1-diphosphate: step 5/9. IGPS catalyzes the conversion of PRFAR and glutamine to IGP, AICAR and glutamate. The HisF subunit catalyzes the cyclization activity that produces IGP and AICAR from PRFAR using the ammonia provided by the HisH subunit. The chain is Imidazole glycerol phosphate synthase subunit HisF from Gluconacetobacter diazotrophicus (strain ATCC 49037 / DSM 5601 / CCUG 37298 / CIP 103539 / LMG 7603 / PAl5).